The sequence spans 221 residues: UPF0502 protein PSPA7_1674 (221 aa).

It belongs to the UPF0502 family.

The chain is UPF0502 protein PSPA7_1674 from Pseudomonas paraeruginosa (strain DSM 24068 / PA7) (Pseudomonas aeruginosa (strain PA7)).